Here is a 197-residue protein sequence, read N- to C-terminus: Ribosomal RNA large subunit methyltransferase E (197 aa).

S-adenosyl-L-methionine is bound by residues Gly50, Trp52, Asp67, Asp83, and Asp111. Residue Lys151 is the Proton acceptor of the active site.

The protein belongs to the class I-like SAM-binding methyltransferase superfamily. RNA methyltransferase RlmE family.

The protein localises to the cytoplasm. It catalyses the reaction uridine(2552) in 23S rRNA + S-adenosyl-L-methionine = 2'-O-methyluridine(2552) in 23S rRNA + S-adenosyl-L-homocysteine + H(+). In terms of biological role, specifically methylates the uridine in position 2552 of 23S rRNA at the 2'-O position of the ribose in the fully assembled 50S ribosomal subunit. This chain is Ribosomal RNA large subunit methyltransferase E, found in Thermoplasma volcanium (strain ATCC 51530 / DSM 4299 / JCM 9571 / NBRC 15438 / GSS1).